The following is a 144-amino-acid chain: Putative pre-16S rRNA nuclease (144 aa).

It belongs to the YqgF nuclease family.

Its subcellular location is the cytoplasm. Its function is as follows. Could be a nuclease involved in processing of the 5'-end of pre-16S rRNA. This chain is Putative pre-16S rRNA nuclease, found in Lactiplantibacillus plantarum (strain ATCC BAA-793 / NCIMB 8826 / WCFS1) (Lactobacillus plantarum).